We begin with the raw amino-acid sequence, 328 residues long: Tetraacyldisaccharide 4'-kinase (328 aa).

55–62 (TAGGNGKT) serves as a coordination point for ATP.

It belongs to the LpxK family.

The catalysed reaction is a lipid A disaccharide + ATP = a lipid IVA + ADP + H(+). It participates in glycolipid biosynthesis; lipid IV(A) biosynthesis; lipid IV(A) from (3R)-3-hydroxytetradecanoyl-[acyl-carrier-protein] and UDP-N-acetyl-alpha-D-glucosamine: step 6/6. Functionally, transfers the gamma-phosphate of ATP to the 4'-position of a tetraacyldisaccharide 1-phosphate intermediate (termed DS-1-P) to form tetraacyldisaccharide 1,4'-bis-phosphate (lipid IVA). This is Tetraacyldisaccharide 4'-kinase from Shigella flexneri serotype 5b (strain 8401).